The primary structure comprises 290 residues: Picrinine-N-methytransferase (290 aa).

Residues 71 to 80 (MLDVGCGIGG) form an SAM motif I region. The Vacuolar targeting signal signature appears at 133–139 (DGTFDLV). An SAM motif II region spans residues 134 to 142 (GTFDLVFTI). The interval 161 to 170 (VAAPGAPIVI) is SAM motif III.

It belongs to the class I-like SAM-binding methyltransferase superfamily. gTMT family. In terms of assembly, homodimer. In terms of tissue distribution, accumulates in tissues actively synthesizing monoterpenoid indole alkaloids (MIAs) (at protein level). Mainly expressed in young leaves and, to a lower extent, in roots and stems.

It is found in the vacuole membrane. The catalysed reaction is picrinine + S-adenosyl-L-methionine = ervincine + S-adenosyl-L-homocysteine + H(+). It functions in the pathway alkaloid biosynthesis; vindoline biosynthesis. Its function is as follows. S-adenosyl-L-methionine-dependent N-methyltransferase involved in the biosynthesis of biologically active monoterpenoid indole alkaloids (MIAs) natural products including vindoline. Catalyzes the conversion of picrinine to N-methylpicrinine (ervincine). Also accepts, with low efficiency, 21-hydroxycyclolochnericine and norajmaline as substrates. The protein is Picrinine-N-methytransferase of Rauvolfia serpentina (Serpentine wood).